The primary structure comprises 435 residues: Trigger factor (435 aa).

Residues 161-246 (DDQVTLDFEG…LTKVEEQILP (86 aa)) form the PPIase FKBP-type domain.

It belongs to the FKBP-type PPIase family. Tig subfamily.

It is found in the cytoplasm. The catalysed reaction is [protein]-peptidylproline (omega=180) = [protein]-peptidylproline (omega=0). Functionally, involved in protein export. Acts as a chaperone by maintaining the newly synthesized protein in an open conformation. Functions as a peptidyl-prolyl cis-trans isomerase. This chain is Trigger factor, found in Psychromonas ingrahamii (strain DSM 17664 / CCUG 51855 / 37).